The chain runs to 411 residues: LL-diaminopimelate aminotransferase (411 aa).

Tyrosine 15 and glycine 42 together coordinate substrate. Residues tyrosine 72, 108–109 (SK), tyrosine 132, asparagine 187, tyrosine 218, and 246–248 (SFS) each bind pyridoxal 5'-phosphate. 3 residues coordinate substrate: lysine 109, tyrosine 132, and asparagine 187. N6-(pyridoxal phosphate)lysine is present on lysine 249. Arginine 257 and asparagine 292 together coordinate pyridoxal 5'-phosphate. The substrate site is built by asparagine 292 and arginine 388.

Belongs to the class-I pyridoxal-phosphate-dependent aminotransferase family. LL-diaminopimelate aminotransferase subfamily. In terms of assembly, homodimer. The cofactor is pyridoxal 5'-phosphate.

The enzyme catalyses (2S,6S)-2,6-diaminopimelate + 2-oxoglutarate = (S)-2,3,4,5-tetrahydrodipicolinate + L-glutamate + H2O + H(+). The protein operates within amino-acid biosynthesis; L-lysine biosynthesis via DAP pathway; LL-2,6-diaminopimelate from (S)-tetrahydrodipicolinate (aminotransferase route): step 1/1. Its function is as follows. Involved in the synthesis of meso-diaminopimelate (m-DAP or DL-DAP), required for both lysine and peptidoglycan biosynthesis. Catalyzes the direct conversion of tetrahydrodipicolinate to LL-diaminopimelate. The chain is LL-diaminopimelate aminotransferase from Cyanothece sp. (strain PCC 7425 / ATCC 29141).